A 257-amino-acid chain; its full sequence is UPF0246 protein RHOS4_29700 (257 aa).

The protein belongs to the UPF0246 family.

The protein is UPF0246 protein RHOS4_29700 of Cereibacter sphaeroides (strain ATCC 17023 / DSM 158 / JCM 6121 / CCUG 31486 / LMG 2827 / NBRC 12203 / NCIMB 8253 / ATH 2.4.1.) (Rhodobacter sphaeroides).